Consider the following 529-residue polypeptide: CTP synthase (529 aa).

An amidoligase domain region spans residues 1–267; that stretch reads MKEAKFIFVT…DTQILEHFHL (267 aa). Ser15 lines the CTP pocket. Ser15 contacts UTP. Residues 16-21 and Asp73 each bind ATP; that span reads SLGKGL. Mg(2+) contacts are provided by Asp73 and Glu141. CTP-binding positions include 148-150, 188-193, and Lys224; these read DIE and KTKPTQ. Residues 188 to 193 and Lys224 contribute to the UTP site; that span reads KTKPTQ. One can recognise a Glutamine amidotransferase type-1 domain in the interval 292 to 529; the sequence is TVSIVGKYTE…SFVKAAIDKK (238 aa). Gly354 is a binding site for L-glutamine. Residue Cys381 is the Nucleophile; for glutamine hydrolysis of the active site. L-glutamine contacts are provided by residues 382-385, Glu405, and Arg459; that span reads LGMQ. Active-site residues include His504 and Glu506.

This sequence belongs to the CTP synthase family. Homotetramer.

It catalyses the reaction UTP + L-glutamine + ATP + H2O = CTP + L-glutamate + ADP + phosphate + 2 H(+). The catalysed reaction is L-glutamine + H2O = L-glutamate + NH4(+). It carries out the reaction UTP + NH4(+) + ATP = CTP + ADP + phosphate + 2 H(+). Its pathway is pyrimidine metabolism; CTP biosynthesis via de novo pathway; CTP from UDP: step 2/2. With respect to regulation, allosterically activated by GTP, when glutamine is the substrate; GTP has no effect on the reaction when ammonia is the substrate. The allosteric effector GTP functions by stabilizing the protein conformation that binds the tetrahedral intermediate(s) formed during glutamine hydrolysis. Inhibited by the product CTP, via allosteric rather than competitive inhibition. Its function is as follows. Catalyzes the ATP-dependent amination of UTP to CTP with either L-glutamine or ammonia as the source of nitrogen. Regulates intracellular CTP levels through interactions with the four ribonucleotide triphosphates. The protein is CTP synthase of Wolbachia pipientis wMel.